Here is a 368-residue protein sequence, read N- to C-terminus: tRNA-specific 2-thiouridylase MnmA (368 aa).

ATP is bound by residues 12-19 and M38; that span reads GMSGGVDS. The segment at 98–100 is interaction with target base in tRNA; the sequence is NPD. C103 functions as the Nucleophile in the catalytic mechanism. The cysteines at positions 103 and 200 are disulfide-linked. Residue G128 coordinates ATP. The interaction with tRNA stretch occupies residues 150–152; that stretch reads KDQ. The Cysteine persulfide intermediate role is filled by C200. The segment at 311–312 is interaction with tRNA; that stretch reads RY.

Belongs to the MnmA/TRMU family.

It is found in the cytoplasm. The catalysed reaction is S-sulfanyl-L-cysteinyl-[protein] + uridine(34) in tRNA + AH2 + ATP = 2-thiouridine(34) in tRNA + L-cysteinyl-[protein] + A + AMP + diphosphate + H(+). Its function is as follows. Catalyzes the 2-thiolation of uridine at the wobble position (U34) of tRNA, leading to the formation of s(2)U34. The chain is tRNA-specific 2-thiouridylase MnmA from Aeromonas salmonicida (strain A449).